A 176-amino-acid polypeptide reads, in one-letter code: Adipose-secreted signaling protein (176 aa).

The segment at 1–30 is disordered; that stretch reads MATAGKGSKGKGTGVRFTPEGTQGHPQEGT. The segment covering 20-30 has biased composition (polar residues); that stretch reads EGTQGHPQEGT.

This sequence belongs to the ADISSP family.

May be involved in thermogenesis and glucose homeostasis. This is Adipose-secreted signaling protein from Taeniopygia guttata (Zebra finch).